The primary structure comprises 100 residues: Large ribosomal subunit protein uL23 (100 aa).

Belongs to the universal ribosomal protein uL23 family. As to quaternary structure, part of the 50S ribosomal subunit. Contacts protein L29, and trigger factor when it is bound to the ribosome.

In terms of biological role, one of the early assembly proteins it binds 23S rRNA. One of the proteins that surrounds the polypeptide exit tunnel on the outside of the ribosome. Forms the main docking site for trigger factor binding to the ribosome. The protein is Large ribosomal subunit protein uL23 of Baumannia cicadellinicola subsp. Homalodisca coagulata.